The chain runs to 186 residues: Ribosome-recycling factor (186 aa).

The protein belongs to the RRF family.

The protein resides in the cytoplasm. Functionally, responsible for the release of ribosomes from messenger RNA at the termination of protein biosynthesis. May increase the efficiency of translation by recycling ribosomes from one round of translation to another. This chain is Ribosome-recycling factor, found in Paraburkholderia xenovorans (strain LB400).